We begin with the raw amino-acid sequence, 125 residues long: Multifunctional methyltransferase subunit TRM112-like protein (125 aa).

The TRM112 domain maps to 2 to 121 (KLFVHNFMSS…RDGIPNMLKV (120 aa)).

This sequence belongs to the TRM112 family.

The protein resides in the nucleus. The protein localises to the nucleoplasm. It localises to the cytoplasm. Its subcellular location is the perinuclear region. Acts as an activator of both RNA and protein methyltransferases. The sequence is that of Multifunctional methyltransferase subunit TRM112-like protein from Caenorhabditis elegans.